The primary structure comprises 483 residues: tRNA sulfurtransferase (483 aa).

In terms of domain architecture, THUMP spans 62–166; that stretch reads PEICDALTRI…QDKLILVKAR (105 aa). Residues 184–185, lysine 266, glycine 288, and glutamine 297 each bind ATP; that span reads LI. Cysteines 345 and 457 form a disulfide. Residues 405 to 483 form the Rhodanese domain; it reads LADTDVLLDI…GYTNVKVYRP (79 aa). Cysteine 457 functions as the Cysteine persulfide intermediate in the catalytic mechanism.

The protein belongs to the ThiI family.

Its subcellular location is the cytoplasm. The catalysed reaction is [ThiI sulfur-carrier protein]-S-sulfanyl-L-cysteine + a uridine in tRNA + 2 reduced [2Fe-2S]-[ferredoxin] + ATP + H(+) = [ThiI sulfur-carrier protein]-L-cysteine + a 4-thiouridine in tRNA + 2 oxidized [2Fe-2S]-[ferredoxin] + AMP + diphosphate. It catalyses the reaction [ThiS sulfur-carrier protein]-C-terminal Gly-Gly-AMP + S-sulfanyl-L-cysteinyl-[cysteine desulfurase] + AH2 = [ThiS sulfur-carrier protein]-C-terminal-Gly-aminoethanethioate + L-cysteinyl-[cysteine desulfurase] + A + AMP + 2 H(+). It functions in the pathway cofactor biosynthesis; thiamine diphosphate biosynthesis. Functionally, catalyzes the ATP-dependent transfer of a sulfur to tRNA to produce 4-thiouridine in position 8 of tRNAs, which functions as a near-UV photosensor. Also catalyzes the transfer of sulfur to the sulfur carrier protein ThiS, forming ThiS-thiocarboxylate. This is a step in the synthesis of thiazole, in the thiamine biosynthesis pathway. The sulfur is donated as persulfide by IscS. The sequence is that of tRNA sulfurtransferase from Yersinia pseudotuberculosis serotype O:1b (strain IP 31758).